Here is a 206-residue protein sequence, read N- to C-terminus: Uridine kinase (206 aa).

An ATP-binding site is contributed by 9 to 16 (GGSGSGKT).

The protein belongs to the uridine kinase family.

It is found in the cytoplasm. It carries out the reaction uridine + ATP = UMP + ADP + H(+). It catalyses the reaction cytidine + ATP = CMP + ADP + H(+). Its pathway is pyrimidine metabolism; CTP biosynthesis via salvage pathway; CTP from cytidine: step 1/3. It participates in pyrimidine metabolism; UMP biosynthesis via salvage pathway; UMP from uridine: step 1/1. The sequence is that of Uridine kinase from Borrelia duttonii (strain Ly).